The primary structure comprises 442 residues: ATP-dependent protease ATPase subunit HslU (442 aa).

ATP is bound by residues Ile18, 60–65 (GVGKTE), Asp255, Glu320, and Arg392.

This sequence belongs to the ClpX chaperone family. HslU subfamily. A double ring-shaped homohexamer of HslV is capped on each side by a ring-shaped HslU homohexamer. The assembly of the HslU/HslV complex is dependent on binding of ATP.

The protein resides in the cytoplasm. Functionally, ATPase subunit of a proteasome-like degradation complex; this subunit has chaperone activity. The binding of ATP and its subsequent hydrolysis by HslU are essential for unfolding of protein substrates subsequently hydrolyzed by HslV. HslU recognizes the N-terminal part of its protein substrates and unfolds these before they are guided to HslV for hydrolysis. The polypeptide is ATP-dependent protease ATPase subunit HslU (Shewanella putrefaciens (strain CN-32 / ATCC BAA-453)).